The following is a 122-amino-acid chain: Large ribosomal subunit protein uL14c (122 aa).

It belongs to the universal ribosomal protein uL14 family. In terms of assembly, part of the 50S ribosomal subunit.

Its subcellular location is the plastid. The protein localises to the chloroplast. Its function is as follows. Binds to 23S rRNA. The chain is Large ribosomal subunit protein uL14c from Platanus occidentalis (Sycamore).